Here is a 343-residue protein sequence, read N- to C-terminus: Heat-inducible transcription repressor HrcA (343 aa).

This sequence belongs to the HrcA family.

In terms of biological role, negative regulator of class I heat shock genes (grpE-dnaK-dnaJ and groELS operons). Prevents heat-shock induction of these operons. This Mycolicibacterium vanbaalenii (strain DSM 7251 / JCM 13017 / BCRC 16820 / KCTC 9966 / NRRL B-24157 / PYR-1) (Mycobacterium vanbaalenii) protein is Heat-inducible transcription repressor HrcA.